Reading from the N-terminus, the 57-residue chain is Large ribosomal subunit protein bL32 (57 aa).

It belongs to the bacterial ribosomal protein bL32 family.

The polypeptide is Large ribosomal subunit protein bL32 (Mycolicibacterium gilvum (strain PYR-GCK) (Mycobacterium gilvum (strain PYR-GCK))).